The following is a 430-amino-acid chain: Glutamate-1-semialdehyde 2,1-aminomutase (430 aa).

Lys266 is modified (N6-(pyridoxal phosphate)lysine).

The protein belongs to the class-III pyridoxal-phosphate-dependent aminotransferase family. HemL subfamily. Homodimer. It depends on pyridoxal 5'-phosphate as a cofactor.

It is found in the cytoplasm. It catalyses the reaction (S)-4-amino-5-oxopentanoate = 5-aminolevulinate. It participates in porphyrin-containing compound metabolism; protoporphyrin-IX biosynthesis; 5-aminolevulinate from L-glutamyl-tRNA(Glu): step 2/2. This chain is Glutamate-1-semialdehyde 2,1-aminomutase, found in Acidithiobacillus ferrooxidans (strain ATCC 23270 / DSM 14882 / CIP 104768 / NCIMB 8455) (Ferrobacillus ferrooxidans (strain ATCC 23270)).